Here is a 394-residue protein sequence, read N- to C-terminus: Elongation factor Tu (394 aa).

Residues Lys10 to Glu205 enclose the tr-type G domain. The segment at Gly19–Thr26 is G1. Gly19–Thr26 contacts GTP. Residue Thr26 coordinates Mg(2+). Positions Gly61–Asn65 are G2. The tract at residues Asp82–Gly85 is G3. GTP is bound by residues Asp82–His86 and Asn137–Asp140. Residues Asn137–Asp140 are G4. A G5 region spans residues Ser173–Phe175.

Belongs to the TRAFAC class translation factor GTPase superfamily. Classic translation factor GTPase family. EF-Tu/EF-1A subfamily. In terms of assembly, monomer.

Its subcellular location is the cytoplasm. The catalysed reaction is GTP + H2O = GDP + phosphate + H(+). GTP hydrolase that promotes the GTP-dependent binding of aminoacyl-tRNA to the A-site of ribosomes during protein biosynthesis. In Borreliella afzelii (strain PKo) (Borrelia afzelii), this protein is Elongation factor Tu.